A 671-amino-acid chain; its full sequence is cGMP-dependent protein kinase 1 (671 aa).

Ser2 is modified (N-acetylserine). Residues Ser2–Thr59 adopt a coiled-coil conformation. The required for dimerization stretch occupies residues Ser2–Asp102. The leucine-zipper stretch occupies residues Ala9 to Gln44. An autoinhibitory domain region spans residues Pro50–His75. A Phosphothreonine; by autocatalysis modification is found at Thr59. Residues Phe103–Pro220 form a cGMP-binding, high affinity region. Residues Gly167–Ala170 and Arg177–Thr178 contribute to the 3',5'-cyclic AMP site. 3',5'-cyclic GMP-binding positions include Gly167–Ala170, Arg177–Thr178, Arg282, Gly291–Ala294, Arg301–Thr302, and Tyr336. Residues Thr221–Ala341 are cGMP-binding, low affinity. The region spanning Phe360–Phe619 is the Protein kinase domain. ATP-binding positions include Leu366–Val374 and Lys390. The active-site Proton acceptor is Asp484. Thr515 carries the phosphothreonine modification. Residues Glu620–Phe671 enclose the AGC-kinase C-terminal domain. The segment at Pro635–Phe671 is disordered. Acidic residues predominate over residues Phe652–Pro661.

The protein belongs to the protein kinase superfamily. AGC Ser/Thr protein kinase family. cGMP subfamily. As to quaternary structure, isoform alpha: parallel homodimer or heterodimer and also heterotetramer. Interacts directly with PPP1R12A. Non-covalent dimer of dimer of PRKG1-PRKG1 and PPP1R12A-PPP1R12A. This interaction targets PRKG1 to stress fibers to mediate smooth muscle cell relaxation and vasodilation in responses to rises in cGMP. Isoform beta: antiparallel homodimer. Part of cGMP kinase signaling complex at least composed of ACTA2/alpha-actin, CNN1/calponin H1, PLN/phospholamban, PRKG1 and ITPR1. Interacts with IRAG1. Forms a stable complex with ITPR1, IRAG1, and isoform beta of PRKG1. Interacts with TRPC7 (via ankyrin repeat domain). Isoform alpha interacts with RGS2. Interacts with GTF2I. In terms of processing, autophosphorylation increases kinase activity. 65 kDa monomer is produced by proteolytic cleavage. As to expression, high concentrations are detected in various smooth muscle: lung, rumen, trachea, aorta, uterus and stomach. Isoform alpha is expressed predominantly in heart, cerebellum and lung, whereas the beta isoform is expressed in high concentrations in trachea, aorta, stomach and uterus.

It is found in the cytoplasm. The catalysed reaction is L-seryl-[protein] + ATP = O-phospho-L-seryl-[protein] + ADP + H(+). It carries out the reaction L-threonyl-[protein] + ATP = O-phospho-L-threonyl-[protein] + ADP + H(+). Its activity is regulated as follows. In the absence of cGMP, PRKG1 activity is suppressed by autoinhibitory contacts. Its function is as follows. Serine/threonine protein kinase that acts as a key mediator of the nitric oxide (NO)/cGMP signaling pathway. GMP binding activates PRKG1, which phosphorylates serines and threonines on many cellular proteins. Numerous protein targets for PRKG1 phosphorylation are implicated in modulating cellular calcium, but the contribution of each of these targets may vary substantially among cell types. Proteins that are phosphorylated by PRKG1 regulate platelet activation and adhesion, smooth muscle contraction, cardiac function, gene expression, feedback of the NO-signaling pathway, and other processes involved in several aspects of the CNS like axon guidance, hippocampal and cerebellar learning, circadian rhythm and nociception. Smooth muscle relaxation is mediated through lowering of intracellular free calcium, by desensitization of contractile proteins to calcium, and by decrease in the contractile state of smooth muscle or in platelet activation. Regulates intracellular calcium levels via several pathways: phosphorylates IRAG1 and inhibits IP3-induced Ca(2+) release from intracellular stores, phosphorylation of KCNMA1 (BKCa) channels decreases intracellular Ca(2+) levels, which leads to increased opening of this channel. PRKG1 phosphorylates the canonical transient receptor potential channel (TRPC) family which inactivates the associated inward calcium current. Another mode of action of NO/cGMP/PKGI signaling involves PKGI-mediated inactivation of the Ras homolog gene family member A (RhoA). Phosphorylation of RHOA by PRKG1 blocks the action of this protein in myriad processes: regulation of RHOA translocation; decreasing contraction; controlling vesicle trafficking, reduction of myosin light chain phosphorylation resulting in vasorelaxation. Activation of PRKG1 by NO signaling also alters gene expression in a number of tissues. In smooth muscle cells, increased cGMP and PRKG1 activity influence expression of smooth muscle-specific contractile proteins, levels of proteins in the NO/cGMP signaling pathway, down-regulation of the matrix proteins osteopontin and thrombospondin-1 to limit smooth muscle cell migration and phenotype. Regulates vasodilator-stimulated phosphoprotein (VASP) functions in platelets and smooth muscle. The protein is cGMP-dependent protein kinase 1 (PRKG1) of Bos taurus (Bovine).